The primary structure comprises 476 residues: Adenosylhomocysteinase (476 aa).

Residues T65, D140, and E201 each coordinate substrate. 202 to 204 (TTT) provides a ligand contact to NAD(+). Residues K231 and D235 each contribute to the substrate site. Residues N236, 265–270 (GYGDVG), E288, N323, 344–346 (IGH), and N392 contribute to the NAD(+) site.

It belongs to the adenosylhomocysteinase family. NAD(+) serves as cofactor.

The protein localises to the cytoplasm. The catalysed reaction is S-adenosyl-L-homocysteine + H2O = L-homocysteine + adenosine. The protein operates within amino-acid biosynthesis; L-homocysteine biosynthesis; L-homocysteine from S-adenosyl-L-homocysteine: step 1/1. Functionally, may play a key role in the regulation of the intracellular concentration of adenosylhomocysteine. This is Adenosylhomocysteinase from Bacteroides thetaiotaomicron (strain ATCC 29148 / DSM 2079 / JCM 5827 / CCUG 10774 / NCTC 10582 / VPI-5482 / E50).